We begin with the raw amino-acid sequence, 161 residues long: RNA pyrophosphohydrolase (161 aa).

The Nudix hydrolase domain occupies 12–154; it reads PYRPGVGMMI…KRKLYQAVVK (143 aa). A Nudix box motif is present at residues 46–67; the sequence is GGIVPGETPSIAAMREMLEEIG.

This sequence belongs to the Nudix hydrolase family. RppH subfamily. The cofactor is a divalent metal cation.

In terms of biological role, accelerates the degradation of transcripts by removing pyrophosphate from the 5'-end of triphosphorylated RNA, leading to a more labile monophosphorylated state that can stimulate subsequent ribonuclease cleavage. In Rickettsia typhi (strain ATCC VR-144 / Wilmington), this protein is RNA pyrophosphohydrolase.